The following is a 147-amino-acid chain: Helix-loop-helix protein 13 (147 aa).

One can recognise a bHLH domain in the interval 41-93 (EERQTASIRERKRMCSINVAFIELRNYIPTFPYEKRLSKIDTLNLAIAYINML).

Expressed in hermaphrodite dopaminergic neurons (ADE, CEP, and PDE).

Its subcellular location is the nucleus. It is found in the cytoplasm. In terms of biological role, transcriptional activator. Shown to have a role in the negative regulation of exit from L1 arrest and dauer diapause dependent on IIS signaling (insulin and insulin-like growth factor (IGF) signaling). Hypodermal expression is regulated by IIS/daf-16 while neuronal expression is not under the control of IIS/daf-16. The sequence is that of Helix-loop-helix protein 13 from Caenorhabditis elegans.